We begin with the raw amino-acid sequence, 183 residues long: NADH dehydrogenase [ubiquinone] iron-sulfur protein 4, mitochondrial (183 aa).

A mitochondrion-targeting transit peptide spans 1 to 28; that stretch reads MSALRQVMCRSTASLQLYQANRAAAARW. Ser-181 carries the post-translational modification Phosphoserine.

Belongs to the complex I NDUFS4 subunit family.

The protein resides in the mitochondrion inner membrane. Its function is as follows. Accessory subunit of the mitochondrial membrane respiratory chain NADH dehydrogenase (Complex I), that is believed not to be involved in catalysis. Complex I functions in the transfer of electrons from NADH to the respiratory chain. The immediate electron acceptor for the enzyme is believed to be ubiquinone. The chain is NADH dehydrogenase [ubiquinone] iron-sulfur protein 4, mitochondrial from Drosophila melanogaster (Fruit fly).